The following is a 309-amino-acid chain: Ferredoxin--NADP reductase (309 aa).

Positions 25, 33, 38, 77, 107, 267, and 307 each coordinate FAD.

This sequence belongs to the ferredoxin--NADP reductase type 2 family. In terms of assembly, homodimer. The cofactor is FAD.

It carries out the reaction 2 reduced [2Fe-2S]-[ferredoxin] + NADP(+) + H(+) = 2 oxidized [2Fe-2S]-[ferredoxin] + NADPH. The polypeptide is Ferredoxin--NADP reductase (Lactobacillus acidophilus (strain ATCC 700396 / NCK56 / N2 / NCFM)).